A 442-amino-acid polypeptide reads, in one-letter code: Probable serine/threonine-protein kinase PBL17 (442 aa).

The N-myristoyl glycine moiety is linked to residue G2. Residue C4 is the site of S-palmitoyl cysteine attachment. T79 is subject to Phosphothreonine. In terms of domain architecture, Protein kinase spans 90 to 370 (FRPDYILGEG…NHVVEVLETL (281 aa)). Residues 96–104 (LGEGGFGVV) and K125 each bind ATP. The residue at position 170 (Y170) is a Phosphotyrosine. D220 serves as the catalytic Proton acceptor. S254 is subject to Phosphoserine. Phosphothreonine is present on residues T255 and T260. Phosphotyrosine is present on Y268. Residues 385-442 (HSRGKSVTLYEASSDSQGTRDGNGQRRRRPESGRSKSEAAVDTEKYVSTLSEPDTTKI) are disordered. The segment covering 395-406 (EASSDSQGTRDG) has biased composition (polar residues). Over residues 414-429 (PESGRSKSEAAVDTEK) the composition is skewed to basic and acidic residues. Positions 430 to 442 (YVSTLSEPDTTKI) are enriched in polar residues.

The protein belongs to the protein kinase superfamily. Ser/Thr protein kinase family.

The protein resides in the cell membrane. The catalysed reaction is L-seryl-[protein] + ATP = O-phospho-L-seryl-[protein] + ADP + H(+). The enzyme catalyses L-threonyl-[protein] + ATP = O-phospho-L-threonyl-[protein] + ADP + H(+). Its function is as follows. May be involved in plant defense signaling. In Arabidopsis thaliana (Mouse-ear cress), this protein is Probable serine/threonine-protein kinase PBL17.